The primary structure comprises 1031 residues: GTPase-activating protein DDB_G0291510 (1031 aa).

The disordered stretch occupies residues 18–48; sequence VEKGDIDENNSGSINNRPLSPTLFSSNSSNN. The span at 26-41 shows a compositional bias: polar residues; that stretch reads NNSGSINNRPLSPTLF. Positions 186–404 constitute a Rap-GAP domain; that stretch reads FKDLEQTQTE…RTFKDQLESI (219 aa). In terms of domain architecture, CNH spans 471 to 881; sequence NEKINCLDVV…LSNDDCNLDN (411 aa). Residues 920–950 form a disordered region; it reads NNNYNNNGNNSNGGNNNNNNNNNNGCNNSLI.

The chain is GTPase-activating protein DDB_G0291510 from Dictyostelium discoideum (Social amoeba).